The primary structure comprises 450 residues: Putative nucleolar protein 5-3 (450 aa).

The region spanning I252–G370 is the Nop domain. The segment at A375 to K423 is disordered. The segment covering T399 to K423 has biased composition (basic and acidic residues).

This sequence belongs to the NOP5/NOP56 family.

Its subcellular location is the nucleus. It is found in the nucleolus. Required for 60S ribosomal subunit biogenesis. This chain is Putative nucleolar protein 5-3 (NOP5-3), found in Arabidopsis thaliana (Mouse-ear cress).